A 38-amino-acid chain; its full sequence is Large ribosomal subunit protein bL36 (38 aa).

Belongs to the bacterial ribosomal protein bL36 family.

In Streptococcus pneumoniae serotype 4 (strain ATCC BAA-334 / TIGR4), this protein is Large ribosomal subunit protein bL36 (rpmJ).